Reading from the N-terminus, the 551-residue chain is Cation/acetate symporter ActP (551 aa).

14 helical membrane passes run His5 to Gly25, Ile34 to Ala54, Gly77 to Val97, Gly104 to Glu124, Leu150 to Ala170, Val184 to Ala204, Trp207 to Val227, Ile263 to Leu283, Gly304 to Val324, Phe356 to Leu376, Val406 to Glu426, Ile430 to Ile450, Leu469 to Leu489, and Tyr498 to Ile518.

The protein belongs to the sodium:solute symporter (SSF) (TC 2.A.21) family.

The protein resides in the cell inner membrane. Its function is as follows. Transports acetate. The chain is Cation/acetate symporter ActP from Yersinia pestis bv. Antiqua (strain Antiqua).